Consider the following 635-residue polypeptide: UvrABC system protein C (635 aa).

The GIY-YIG domain occupies glutamate 20–isoleucine 97. The region spanning lysine 207–valine 242 is the UVR domain.

Belongs to the UvrC family. In terms of assembly, interacts with UvrB in an incision complex.

It localises to the cytoplasm. Its function is as follows. The UvrABC repair system catalyzes the recognition and processing of DNA lesions. UvrC both incises the 5' and 3' sides of the lesion. The N-terminal half is responsible for the 3' incision and the C-terminal half is responsible for the 5' incision. The sequence is that of UvrABC system protein C from Rickettsia bellii (strain RML369-C).